Here is a 142-residue protein sequence, read N- to C-terminus: Hemoglobin subunit alpha (142 aa).

Serine 1 is modified (N-acetylserine). Residues 1 to 142 (SLSEKNKAAV…VALALADRYR (142 aa)) enclose the Globin domain. An O2-binding site is contributed by histidine 59. Histidine 88 is a binding site for heme b.

This sequence belongs to the globin family. In terms of assembly, heterotetramer of two alpha chains and two beta chains. In terms of tissue distribution, red blood cells.

In terms of biological role, involved in oxygen transport from gills to the various peripheral tissues. In Pagothenia borchgrevinki (Bald rockcod), this protein is Hemoglobin subunit alpha (hba).